A 102-amino-acid polypeptide reads, in one-letter code: Integration host factor subunit beta (102 aa).

Belongs to the bacterial histone-like protein family. Heterodimer of an alpha and a beta chain.

This protein is one of the two subunits of integration host factor, a specific DNA-binding protein that functions in genetic recombination as well as in transcriptional and translational control. The sequence is that of Integration host factor subunit beta from Rhodopseudomonas palustris (strain BisA53).